Here is a 302-residue protein sequence, read N- to C-terminus: Mediator of RNA polymerase II transcription subunit 4 (302 aa).

A coiled-coil region spans residues 98–145 (QLHANVEKIIAINDDLKSKIEELDRHRRLGENIKELEAESSNLDNTSK). A disordered region spans residues 239 to 302 (GTTEEEKIQE…LFDSEDEFSD (64 aa)). A compositionally biased stretch (basic and acidic residues) spans 242–265 (EEEKIQEKKDEQVKKADKQQDTGI). A compositionally biased stretch (low complexity) spans 268–278 (GSFGDYGSSSS). Positions 292-302 (DLFDSEDEFSD) are enriched in acidic residues.

This sequence belongs to the Mediator complex subunit 4 family. In terms of assembly, component of the Mediator complex.

The protein localises to the nucleus. Functionally, component of the Mediator complex, a coactivator involved in the regulated transcription of nearly all RNA polymerase II-dependent genes. Mediator functions as a bridge to convey information from gene-specific regulatory proteins to the basal RNA polymerase II transcription machinery. Mediator is recruited to promoters by direct interactions with regulatory proteins and serves as a scaffold for the assembly of a functional preinitiation complex with RNA polymerase II and the general transcription factors. In Scheffersomyces stipitis (strain ATCC 58785 / CBS 6054 / NBRC 10063 / NRRL Y-11545) (Yeast), this protein is Mediator of RNA polymerase II transcription subunit 4 (MED4).